A 503-amino-acid polypeptide reads, in one-letter code: Ell-associated factor Eaf (503 aa).

Composition is skewed to polar residues over residues 119–145 (TRNEVSNKSVQLPGQNMGQGQPHNQGA) and 167–186 (ENSTMRISTKTKVSTGSRRN). 3 disordered regions span residues 119-220 (TRNE…PAWD), 250-360 (GHAN…SQSV), and 372-503 (GGVL…DDDD). Ser196 carries the post-translational modification Phosphoserine. The segment covering 202-215 (SPSRPVPVHRSPQS) has biased composition (low complexity). 2 stretches are compositionally biased toward polar residues: residues 250 to 273 (GHANRSGSAAGQPDFVSTSSSTHI) and 298 to 307 (MAQQQQQHPS). The segment covering 308-337 (NYGRGYNGGHNHAQQQQQQQRNSPPRQRPS) has biased composition (low complexity). The span at 385–400 (DSSDSDSGSDSDDSTE) shows a compositional bias: acidic residues. Composition is skewed to low complexity over residues 406–437 (QGQQQDHQQQPHQVYQNHNHTQQQVTQQHHNQ), 454–472 (HQQQHQQQMLQHQQKQKQQ), and 487–497 (LQNDLQLSSNS).

The protein belongs to the EAF family.

It localises to the nucleus. Its function is as follows. Promotes transcriptional elongation by Su(Tpl)/ELL. Essential for development. The polypeptide is Ell-associated factor Eaf (Drosophila sechellia (Fruit fly)).